We begin with the raw amino-acid sequence, 459 residues long: Cysteine--tRNA ligase (459 aa).

Cys-28 is a Zn(2+) binding site. Residues 30 to 40 (ITIYDLCHIGH) carry the 'HIGH' region motif. Residues Cys-209, His-234, and Glu-238 each contribute to the Zn(2+) site. The 'KMSKS' region motif lies at 266 to 270 (KMSKS). Lys-269 lines the ATP pocket.

This sequence belongs to the class-I aminoacyl-tRNA synthetase family. As to quaternary structure, monomer. The cofactor is Zn(2+).

The protein localises to the cytoplasm. It carries out the reaction tRNA(Cys) + L-cysteine + ATP = L-cysteinyl-tRNA(Cys) + AMP + diphosphate. The protein is Cysteine--tRNA ligase of Shewanella denitrificans (strain OS217 / ATCC BAA-1090 / DSM 15013).